The primary structure comprises 165 residues: Thiol peroxidase (165 aa).

A Thioredoxin domain is found at 18 to 165 (PQKGAQAPAF…PNYAAALAAL (148 aa)). Cys-60 (cysteine sulfenic acid (-SOH) intermediate) is an active-site residue. Cys-60 and Cys-94 are joined by a disulfide.

Belongs to the peroxiredoxin family. Tpx subfamily. Homodimer.

It carries out the reaction a hydroperoxide + [thioredoxin]-dithiol = an alcohol + [thioredoxin]-disulfide + H2O. In terms of biological role, thiol-specific peroxidase that catalyzes the reduction of hydrogen peroxide and organic hydroperoxides to water and alcohols, respectively. Plays a role in cell protection against oxidative stress by detoxifying peroxides. The chain is Thiol peroxidase from Pseudomonas aeruginosa (strain ATCC 15692 / DSM 22644 / CIP 104116 / JCM 14847 / LMG 12228 / 1C / PRS 101 / PAO1).